The sequence spans 101 residues: UPF0473 protein LAF_0524 (101 aa).

It belongs to the UPF0473 family.

This chain is UPF0473 protein LAF_0524, found in Limosilactobacillus fermentum (strain NBRC 3956 / LMG 18251) (Lactobacillus fermentum).